A 253-amino-acid polypeptide reads, in one-letter code: Indole-3-glycerol phosphate synthase (253 aa).

The protein belongs to the TrpC family.

The enzyme catalyses 1-(2-carboxyphenylamino)-1-deoxy-D-ribulose 5-phosphate + H(+) = (1S,2R)-1-C-(indol-3-yl)glycerol 3-phosphate + CO2 + H2O. It functions in the pathway amino-acid biosynthesis; L-tryptophan biosynthesis; L-tryptophan from chorismate: step 4/5. The protein is Indole-3-glycerol phosphate synthase of Bacillus cereus (strain ATCC 14579 / DSM 31 / CCUG 7414 / JCM 2152 / NBRC 15305 / NCIMB 9373 / NCTC 2599 / NRRL B-3711).